The following is a 369-amino-acid chain: Biglycan (369 aa).

The first 16 residues, 1–16, serve as a signal peptide directing secretion; it reads MCPLWLLTLLLALSQA. Residues 17–37 constitute a propeptide that is removed on maturation; the sequence is LPFEQKGFWDFTLDDGLLMMN. Residues Ser-42 and Ser-48 are each glycosylated (O-linked (Xyl...) (glycosaminoglycan) serine). 2 disulfide bridges follow: Cys-64-Cys-70 and Cys-68-Cys-77. LRR repeat units lie at residues 83–103, 104–127, 128–151, 152–172, 173–196, 197–221, 222–242, 243–266, 267–290, 291–313, 314–343, and 344–369; these read KTVP…NNDI, SELR…NNKI, SKIH…KNHL, VEIP…DNRI, RKVP…GNPL, ENSG…EAKL, TGIP…HNKI, QAIE…HNQI, RMIE…NNKL, SRVP…SNNI, TKVG…NNPV, and PYWE…NYKK. Residues Asn-271 and Asn-312 are each glycosylated (N-linked (GlcNAc...) asparagine). A disulfide bridge links Cys-322 with Cys-355.

This sequence belongs to the small leucine-rich proteoglycan (SLRP) family. SLRP class I subfamily. In terms of processing, the two attached glycosaminoglycan chains can be either chondroitin sulfate or dermatan sulfate. Found in several connective tissues, especially in articular cartilages.

The protein localises to the secreted. It localises to the extracellular space. The protein resides in the extracellular matrix. Functionally, may be involved in collagen fiber assembly. This is Biglycan (Bgn) from Mus musculus (Mouse).